The chain runs to 830 residues: MANCQIAILYQRFQRVVFGISQLLCFSALISELTNQKEVAAWTYHYSTKAYSWNISRKYCQNRYTDLVAIQNKNEIDYLNKVLPYYSSYYWIGIRKNNKTWTWVGTKKALTNEAENWADNEPNNKRNNEDCVEIYIKSPSAPGKWNDEHCLKKKHALCYTASCQDMSCSKQGECLETIGNYTCSCYPGFYGPECEYVRECGELELPQHVLMNCSHPLGNFSFNSQCSFHCTDGYQVNGPSKLECLASGIWTNKPPQCLAAQCPPLKIPERGNMTCLHSAKAFQHQSSCSFSCEEGFALVGPEVVQCTASGVWTAPAPVCKAVQCQHLEAPSEGTMDCVHPLTAFAYGSSCKFECQPGYRVRGLDMLRCIDSGHWSAPLPTCEAISCEPLESPVHGSMDCSPSLRAFQYDTNCSFRCAEGFMLRGADIVRCDNLGQWTAPAPVCQALQCQDLPVPNEARVNCSHPFGAFRYQSVCSFTCNEGLLLVGASVLQCLATGNWNSVPPECQAIPCTPLLSPQNGTMTCVQPLGSSSYKSTCQFICDEGYSLSGPERLDCTRSGRWTDSPPMCEAIKCPELFAPEQGSLDCSDTRGEFNVGSTCHFSCDNGFKLEGPNNVECTTSGRWSATPPTCKGIASLPTPGVQCPALTTPGQGTMYCRHHPGTFGFNTTCYFGCNAGFTLIGDSTLSCRPSGQWTAVTPACRAVKCSELHVNKPIAMNCSNLWGNFSYGSICSFHCLEGQLLNGSAQTACQENGHWSTTVPTCQAGPLTIQEALTYFGGAVASTIGLIMGGTLLALLRKRFRQKDDGKCPLNPHSHLGTYGVFTNAAFDPSP.

The N-terminal stretch at 1–41 (MANCQIAILYQRFQRVVFGISQLLCFSALISELTNQKEVAA) is a signal peptide. At 42 to 771 (WTYHYSTKAY…QAGPLTIQEA (730 aa)) the chain is on the extracellular side. Residues asparagine 54 and asparagine 98 are each glycosylated (N-linked (GlcNAc...) asparagine). Residues 58 to 158 (KYCQNRYTDL…HCLKKKHALC (101 aa)) enclose the C-type lectin domain. Intrachain disulfides connect cysteine 60–cysteine 158, cysteine 131–cysteine 150, cysteine 163–cysteine 174, cysteine 168–cysteine 183, cysteine 185–cysteine 194, cysteine 200–cysteine 244, cysteine 230–cysteine 257, cysteine 262–cysteine 306, cysteine 292–cysteine 319, cysteine 324–cysteine 368, cysteine 354–cysteine 381, cysteine 386–cysteine 430, cysteine 416–cysteine 443, cysteine 448–cysteine 492, cysteine 478–cysteine 505, cysteine 510–cysteine 554, cysteine 540–cysteine 567, cysteine 572–cysteine 616, cysteine 602–cysteine 629, cysteine 642–cysteine 686, cysteine 672–cysteine 699, cysteine 704–cysteine 748, and cysteine 734–cysteine 761. 3 residues coordinate Ca(2+): glutamate 121, asparagine 123, and asparagine 124. Residue asparagine 123 coordinates a carbohydrate. Residues glutamate 133 and asparagine 146 each coordinate a carbohydrate. Ca(2+) contacts are provided by asparagine 146 and aspartate 147. One can recognise an EGF-like domain in the interval 159 to 195 (YTASCQDMSCSKQGECLETIGNYTCSCYPGFYGPECE). Asparagine 180 carries an N-linked (GlcNAc...) asparagine glycan. 9 Sushi domains span residues 198–259 (RECG…QCLA), 260–321 (AQCP…VCKA), 322–383 (VQCQ…TCEA), 384–445 (ISCE…VCQA), 446–507 (LQCQ…ECQA), 508–569 (IPCT…MCEA), 570–631 (IKCP…TCKG), 640–701 (VQCP…ACRA), and 702–763 (VKCS…TCQA). N-linked (GlcNAc...) asparagine glycosylation is found at asparagine 212 and asparagine 219. A glycan (N-linked (GlcNAc...) asparagine) is linked at asparagine 411. A glycan (N-linked (GlcNAc...) asparagine) is linked at asparagine 460. Residue asparagine 518 is glycosylated (N-linked (GlcNAc...) asparagine). Residue asparagine 665 is glycosylated (N-linked (GlcNAc...) asparagine). N-linked (GlcNAc...) asparagine glycosylation is found at asparagine 716, asparagine 723, and asparagine 741. Residues 772 to 795 (LTYFGGAVASTIGLIMGGTLLALL) form a helical membrane-spanning segment. Residues 796–830 (RKRFRQKDDGKCPLNPHSHLGTYGVFTNAAFDPSP) are Cytoplasmic-facing. A lipid anchor (S-palmitoyl cysteine; alternate) is attached at cysteine 807. Cysteine 807 carries the S-stearoyl cysteine; alternate lipid modification. The short motif at 818–821 (YGVF) is the Endocytosis signal element. The tract at residues 821–830 (FTNAAFDPSP) is interaction with SNX17.

This sequence belongs to the selectin/LECAM family. As to quaternary structure, interacts with SNX17. Interacts with SELPLG/PSGL1 and PODXL2 and mediates neutrophil adhesion and leukocyte rolling. This interaction requires the sialyl-Lewis X epitope of SELPLG and PODXL2, and specific tyrosine sulfation on SELPLG. Interacts (via C-type lectin domain) with alpha-IIb/beta3 integrin ITGA2B:ITGB3 and alpha-V/beta-3 integrin ITGAV:ITGB3. Interacts with alpha5/beta1 integrin ITGA5:ITGB1 and alpha4/beta1 integrin ITGA4:ITGB. Stored in the alpha-granules of platelets and Weibel-Palade bodies of endothelial cells. Upon cell activation by agonists, P-selectin is transported rapidly to the cell surface.

The protein resides in the cell membrane. Functionally, ca(2+)-dependent receptor for myeloid cells that binds to carbohydrates on neutrophils and monocytes. Mediates the interaction of activated endothelial cells or platelets with leukocytes. The ligand recognized is sialyl-Lewis X. Mediates rapid rolling of leukocyte rolling over vascular surfaces during the initial steps in inflammation through interaction with SELPLG. Mediates cell-cell interactions and cell adhesion via the interaction with integrin alpha-IIb/beta3 (ITGA2B:ITGB3) and integrin alpha-V/beta-3 (ITGAV:ITGB3). This chain is P-selectin (SELP), found in Homo sapiens (Human).